The chain runs to 240 residues: tRNA (guanine-N(1)-)-methyltransferase (240 aa).

S-adenosyl-L-methionine contacts are provided by residues glycine 108 and 127–132 (LGDYIL).

It belongs to the RNA methyltransferase TrmD family. As to quaternary structure, homodimer.

It localises to the cytoplasm. The enzyme catalyses guanosine(37) in tRNA + S-adenosyl-L-methionine = N(1)-methylguanosine(37) in tRNA + S-adenosyl-L-homocysteine + H(+). In terms of biological role, specifically methylates guanosine-37 in various tRNAs. This is tRNA (guanine-N(1)-)-methyltransferase from Streptococcus sanguinis (strain SK36).